A 326-amino-acid polypeptide reads, in one-letter code: Thiamine thiazole synthase (326 aa).

Substrate-binding positions include Cys87, 108-109 (EA), Gly116, and Val181. Cys215 bears the 2,3-didehydroalanine (Cys) mark. Residues Asp217, His232, Met284, and 294-296 (RMG) contribute to the substrate site.

It belongs to the THI4 family. In terms of assembly, homooctamer. Requires Fe cation as cofactor. During the catalytic reaction, a sulfide is transferred from Cys-215 to a reaction intermediate, generating a dehydroalanine residue.

The protein localises to the cytoplasm. The protein resides in the nucleus. It carries out the reaction [ADP-thiazole synthase]-L-cysteine + glycine + NAD(+) = [ADP-thiazole synthase]-dehydroalanine + ADP-5-ethyl-4-methylthiazole-2-carboxylate + nicotinamide + 3 H2O + 2 H(+). Its function is as follows. Involved in biosynthesis of the thiamine precursor thiazole. Catalyzes the conversion of NAD and glycine to adenosine diphosphate 5-(2-hydroxyethyl)-4-methylthiazole-2-carboxylic acid (ADT), an adenylated thiazole intermediate. The reaction includes an iron-dependent sulfide transfer from a conserved cysteine residue of the protein to a thiazole intermediate. The enzyme can only undergo a single turnover, which suggests it is a suicide enzyme. May have additional roles in adaptation to various stress conditions and in DNA damage tolerance. The chain is Thiamine thiazole synthase from Sclerotinia sclerotiorum (strain ATCC 18683 / 1980 / Ss-1) (White mold).